Here is a 2690-residue protein sequence, read N- to C-terminus: Probable polyketide synthase 28 (2690 aa).

Residues 15–443 (YGDVAVIGIG…GSNVCLILSE (429 aa)) enclose the Ketosynthase family 3 (KS3) domain. Catalysis depends on for beta-ketoacyl synthase activity residues cysteine 187, histidine 326, and histidine 366. Residues 651–684 (GVSADIIVGHSLGELSSSYSSGMIDFETLCHLIY) are acyl/malonyl transferases. The active-site For acyl/malonyl transferase activity is the serine 661. The stretch at 906–934 (NFKSQLTNINNNNNNINNNNNNNNNNNNN) forms a coiled coil. Residues 916 to 946 (NNNNNINNNNNNNNNNNNNNNNNNNNNNNNN) form a disordered region. The segment at 973–1102 (HEKITNEGPS…GNFSLFKHNS (130 aa)) is N-terminal hotdog fold. A PKS/mFAS DH domain is found at 973 to 1285 (HEKITNEGPS…CSSVSLANPS (313 aa)). Residue histidine 1014 is the Proton acceptor; for dehydratase activity of the active site. Residues 1119–1285 (NFTTISKHDF…CSSVSLANPS (167 aa)) are C-terminal hotdog fold. Residue aspartate 1188 is the Proton donor; for dehydratase activity of the active site. Residues 1401–1429 (LNHHNNSENKNKNNNNNNNSNNNENSNNE) form a disordered region. A compositionally biased stretch (low complexity) spans 1412 to 1429 (KNNNNNNNSNNNENSNNE). The Carrier domain maps to 2594-2671 (SDNEFIHSTI…QSIDIIKFGY (78 aa)). Serine 2631 carries the post-translational modification O-(pantetheine 4'-phosphoryl)serine.

Pantetheine 4'-phosphate serves as cofactor.

Functionally, probable polyketide synthase. This Dictyostelium discoideum (Social amoeba) protein is Probable polyketide synthase 28 (pks28).